The primary structure comprises 179 residues: Natural killer cells antigen CD94 (179 aa).

Residues 1-10 (MAVFKTTLWR) lie on the Cytoplasmic side of the membrane. The helical; Signal-anchor for type II membrane protein transmembrane segment at 11 to 31 (LISGTLGIICLSLMATLGILL) threads the bilayer. Topologically, residues 32 to 179 (KNSFTKLSVE…NRYICKQQLI (148 aa)) are extracellular. 2 disulfides stabilise this stretch: Cys-58–Cys-70 and Cys-61–Cys-72. One can recognise a C-type lectin domain in the interval 68–175 (YRCNCYFISS…CETKNRYICK (108 aa)). 2 N-linked (GlcNAc...) asparagine glycosylation sites follow: Asn-83 and Asn-132. 2 disulfides stabilise this stretch: Cys-89–Cys-174 and Cys-152–Cys-166.

As to quaternary structure, can form disulfide-bonded heterodimer with NKG2 family members KLRC1 and KLRC2. KLRD1-KLRC1 heterodimer interacts with peptide-bound MHC-E-B2M heterotrimeric complex. KLRD1 plays a prominent role in directly interacting with MHC-E. KLRD1-KLRC1 interacts with much higher affinity with peptide-bound MHC-E-B2M than KLRD1-KLRC2. Interacts with the adapter protein TYROBP/DAP12; this interaction is required for cell surface expression and cell activation. Natural killer cells.

The protein localises to the cell membrane. Functionally, immune receptor involved in self-nonself discrimination. In complex with KLRC1 or KLRC2 on cytotoxic and regulatory lymphocyte subsets, recognizes non-classical major histocompatibility (MHC) class Ib molecule MHC-E loaded with self-peptides derived from the signal sequence of classical MHC class Ia and non-classical MHC class Ib molecules. Enables cytotoxic cells to monitor the expression of MHC class I molecules in healthy cells and to tolerate self. Primarily functions as a ligand binding subunit as it lacks the capacity to signal. KLRD1-KLRC1 acts as an immune inhibitory receptor. Key inhibitory receptor on natural killer (NK) cells that regulates their activation and effector functions. Dominantly counteracts T cell receptor signaling on a subset of memory/effector CD8-positive T cells as part of an antigen-driven response to avoid autoimmunity. On intraepithelial CD8-positive gamma-delta regulatory T cells triggers TGFB1 secretion, which in turn limits the cytotoxic programming of intraepithelial CD8-positive alpha-beta T cells, distinguishing harmless from pathogenic antigens. In MHC-E-rich tumor microenvironment, acts as an immune inhibitory checkpoint and may contribute to progressive loss of effector functions of NK cells and tumor-specific T cells, a state known as cell exhaustion. Upon MHC-E-peptide binding, transmits intracellular signals through KLRC1 immunoreceptor tyrosine-based inhibition motifs (ITIMs) by recruiting INPP5D/SHIP-1 and INPPL1/SHIP-2 tyrosine phosphatases to ITIMs, and ultimately opposing signals transmitted by activating receptors through dephosphorylation of proximal signaling molecules. In terms of biological role, KLRD1-KLRC2 acts as an immune activating receptor. On cytotoxic lymphocyte subsets recognizes MHC-E loaded with signal sequence-derived peptides from non-classical MHC class Ib MHC-G molecules, likely playing a role in the generation and effector functions of adaptive NK cells and in maternal-fetal tolerance during pregnancy. Regulates the effector functions of terminally differentiated cytotoxic lymphocyte subsets, and in particular may play a role in adaptive NK cell response to viral infection. Upon MHC-E-peptide binding, transmits intracellular signals via the adapter protein TYROBP/DAP12, triggering the phosphorylation of proximal signaling molecules and cell activation. The protein is Natural killer cells antigen CD94 (KLRD1) of Macaca mulatta (Rhesus macaque).